The following is a 283-amino-acid chain: MYQSMDLDDIKGHSHIINEDAEFDKTDSDNTFALELQKIIQQETNGGKVQDDVLAEAIATVDVDLPYLSNVSSPGLVYGTNKQSEHPQSHGGKDSDLTVEHILGDLQSGTEDDKEFTDRLNRLLCAPDSLKRGFSGDMEIDIPSNKKRKSVYETLSPPESMSPLSDKNDAQQNRDLNTHKDFSAMKRKINSQRMLKQVPLPPKLTNEFTMTQVAEMKKRVINTHKLILNFNFLKDGYARSCEELSKTVVKLKDSEFDRARLVKENQDLKRMVLEMSKQLNEKQ.

The segment at 148-174 (RKSVYETLSPPESMSPLSDKNDAQQNR) is disordered. Positions 157–174 (PPESMSPLSDKNDAQQNR) are enriched in polar residues.

Its subcellular location is the cytoplasm. The protein localises to the nucleus. In terms of biological role, involved in cation homeostasis and in the regulation of the cation stress signaling cascades. In Kluyveromyces lactis (strain ATCC 8585 / CBS 2359 / DSM 70799 / NBRC 1267 / NRRL Y-1140 / WM37) (Yeast), this protein is Protein ATC1/LIC4 (ATC1).